The primary structure comprises 415 residues: Homoserine O-succinyltransferase (415 aa).

Positions Asn69–Asp383 constitute an AB hydrolase-1 domain. The active-site Nucleophile is Ser175. A substrate-binding site is contributed by Arg245. Residues Asp344 and His377 contribute to the active site. Asp378 lines the substrate pocket.

It belongs to the AB hydrolase superfamily. MetX family. In terms of assembly, homodimer.

Its subcellular location is the cytoplasm. It carries out the reaction L-homoserine + succinyl-CoA = O-succinyl-L-homoserine + CoA. It participates in amino-acid biosynthesis; L-methionine biosynthesis via de novo pathway; O-succinyl-L-homoserine from L-homoserine: step 1/1. Its function is as follows. Transfers a succinyl group from succinyl-CoA to L-homoserine, forming succinyl-L-homoserine. In Bordetella pertussis (strain Tohama I / ATCC BAA-589 / NCTC 13251), this protein is Homoserine O-succinyltransferase.